Reading from the N-terminus, the 220-residue chain is Uracil phosphoribosyltransferase 2 (220 aa).

Position 77 to 80 (77 to 80 (ARDI)) interacts with GTP. 5-phospho-alpha-D-ribose 1-diphosphate-binding residues include Arg87 and Arg113. Arg134 serves as a coordination point for GTP. 5-phospho-alpha-D-ribose 1-diphosphate contacts are provided by residues Asp140 and 140 to 148 (DPLLATGNS). Residue Tyr204 coordinates D-ribose 5-phosphate. Uracil contacts are provided by residues Val205 and 210 to 212 (GDF). Asp211 is a binding site for 5-phospho-alpha-D-ribose 1-diphosphate.

This sequence belongs to the UPRTase family. It depends on Mg(2+) as a cofactor.

It carries out the reaction UMP + diphosphate = 5-phospho-alpha-D-ribose 1-diphosphate + uracil. It functions in the pathway pyrimidine metabolism; UMP biosynthesis via salvage pathway; UMP from uracil: step 1/1. Its activity is regulated as follows. Allosterically activated by GTP. Functionally, catalyzes the conversion of uracil and 5-phospho-alpha-D-ribose 1-diphosphate (PRPP) to UMP and diphosphate. The protein is Uracil phosphoribosyltransferase 2 of Schizosaccharomyces pombe (strain 972 / ATCC 24843) (Fission yeast).